We begin with the raw amino-acid sequence, 140 residues long: Truncated tyrosine phosphatase D1 (140 aa).

Residues 1 to 140 (MRRPNCIAEI…SAQWIQFLKK (140 aa)) enclose the Tyrosine-protein phosphatase domain.

Belongs to the protein-tyrosine phosphatase family.

The polypeptide is Truncated tyrosine phosphatase D1 (D1) (Microplitis demolitor bracovirus (isolate Webb) (MdBV)).